A 497-amino-acid chain; its full sequence is Serine/threonine-protein kinase cst-1 (497 aa).

The disordered stretch occupies residues 1 to 27 (MPPSTDSSRRNSEEGSSDGFKLDSSAL). The 252-residue stretch at 35 to 286 (FDIVGKLGEG…ALRLCEHTFI (252 aa)) folds into the Protein kinase domain. Residues 41 to 49 (LGEGSYGSV) and lysine 64 each bind ATP. The active-site Proton acceptor is aspartate 154. Positions 367-416 (KSAYIPGSSKNGNSPRVQPPGHTASASDPSKNQPFAQDGTGPNFQLGTSE) are disordered. The segment covering 390-416 (ASASDPSKNQPFAQDGTGPNFQLGTSE) has biased composition (polar residues). One can recognise an SARAH domain in the interval 446–493 (FEFLRNITLDELIRRKESLDSEMEEEIRELQRRYKTKRQPILDVIEIK). Residues 450–486 (RNITLDELIRRKESLDSEMEEEIRELQRRYKTKRQPI) adopt a coiled-coil conformation.

It belongs to the protein kinase superfamily. STE Ser/Thr protein kinase family. STE20 subfamily. Interacts with rsf-1 (via SARAH domain); the interaction is required for the phosphorylation of cst-1. Requires Mg(2+) as cofactor. Proteolytically cleaved by caspase-3 during apoptosis which results in kinase activation. In terms of processing, phosphorylated. Widely expressed in epidermal cells.

The catalysed reaction is L-seryl-[protein] + ATP = O-phospho-L-seryl-[protein] + ADP + H(+). It catalyses the reaction L-threonyl-[protein] + ATP = O-phospho-L-threonyl-[protein] + ADP + H(+). Its function is as follows. Serine/threonine-protein kinase which extends lifespan and delays tissue aging, probably by activating daf-16. The chain is Serine/threonine-protein kinase cst-1 from Caenorhabditis elegans.